The primary structure comprises 145 residues: Flagellar assembly factor FliW (145 aa).

Belongs to the FliW family. Interacts with translational regulator CsrA and flagellin(s).

The protein resides in the cytoplasm. Functionally, acts as an anti-CsrA protein, binds CsrA and prevents it from repressing translation of its target genes, one of which is flagellin. Binds to flagellin and participates in the assembly of the flagellum. The protein is Flagellar assembly factor FliW of Thermosipho africanus (strain TCF52B).